Reading from the N-terminus, the 188-residue chain is HTH-type transcriptional regulator Mb3439c (188 aa).

Positions 17-77 (EEVAAAILQA…AVLDHLGTKL (61 aa)) constitute an HTH tetR-type domain. Residues 40–59 (SIRDIAARSKVNHGLVFRHF) constitute a DNA-binding region (H-T-H motif).

Its function is as follows. Negatively regulates the expression of sulfate ester dioxygenase Mb3440 and its own expression. This chain is HTH-type transcriptional regulator Mb3439c, found in Mycobacterium bovis (strain ATCC BAA-935 / AF2122/97).